Reading from the N-terminus, the 247-residue chain is MTTSAQSVLELLPAVDIVDGQAVRLLQGEAGSETSYGTPLEAALNWQNDGAEWVHMVDLDAAFGRGNNAALISDVVSQLNVKVELSGGLRDDESLERALELGVARVNLGTAALENPEWTRKAIDRFGDKIAVGLDVRGTTLAGRGWTKEGGDLWEVLARLEDAGCARYVVTDVTKDGTLQGPNVELLRQMVEKTGKPVVASGGISSLEDLRVLRELVPLGVEGAIVGKALYAGAFTLPEALDVAGRR.

Residue aspartate 16 is the Proton acceptor of the active site. The active-site Proton donor is the aspartate 135.

Belongs to the HisA/HisF family.

The protein localises to the cytoplasm. It carries out the reaction 1-(5-phospho-beta-D-ribosyl)-5-[(5-phospho-beta-D-ribosylamino)methylideneamino]imidazole-4-carboxamide = 5-[(5-phospho-1-deoxy-D-ribulos-1-ylimino)methylamino]-1-(5-phospho-beta-D-ribosyl)imidazole-4-carboxamide. Its pathway is amino-acid biosynthesis; L-histidine biosynthesis; L-histidine from 5-phospho-alpha-D-ribose 1-diphosphate: step 4/9. In Paenarthrobacter aurescens (strain TC1), this protein is 1-(5-phosphoribosyl)-5-[(5-phosphoribosylamino)methylideneamino] imidazole-4-carboxamide isomerase.